Here is a 166-residue protein sequence, read N- to C-terminus: Small ribosomal subunit protein uS5 (166 aa).

In terms of domain architecture, S5 DRBM spans 11–74; that stretch reads LQEKLISVNR…DKARKNMIII (64 aa).

Belongs to the universal ribosomal protein uS5 family. Part of the 30S ribosomal subunit. Contacts proteins S4 and S8.

Its function is as follows. With S4 and S12 plays an important role in translational accuracy. In terms of biological role, located at the back of the 30S subunit body where it stabilizes the conformation of the head with respect to the body. This Wigglesworthia glossinidia brevipalpis protein is Small ribosomal subunit protein uS5.